The chain runs to 357 residues: MIATINGDTKINGKGHPTEVRIPDMFGSIMSATPMVNPHHFKVKAAADAFIADYLKMDKHEATKNRKADFCFCASAMAPHADAEALRTMVDWLNWIFYFDDDFDEGQLDRDPVAAEKEIRHTLAVLEEGAEIPDRELHPLRYLFRTIWDRVKERAYPDVQTQFKITHKRYLDGLLHQVEATRDGNGQPRTEEDYIRMRRRTVGGYPCISLIAYAHNVDLSQEAFEHPSVQECIAVGCDLAWIHNDIVSYKKDVKSGIEHNFITVLKKNGFTTQQAMDRAGELQDECYRRWYLALASMPIWGESIDREVLRYIEACHSFPLGDLLWSFQTGRYLGATEGYKLHETRVLDLSDLEPIAV.

Residues Asp-100 and Glu-105 each coordinate Mg(2+). Positions 100–105 (DDDFDE) match the DDXXE motif motif. Residue Arg-198 coordinates substrate. Residues Asn-244 and Ser-248 each contribute to the Mg(2+) site. Lys-251 serves as a coordination point for substrate. Asp-252 serves as a coordination point for Mg(2+). 331–332 (RY) lines the substrate pocket.

It belongs to the terpene synthase family. It depends on Mg(2+) as a cofactor.

It carries out the reaction (2E,6E)-farnesyl diphosphate = (+)-eremophilene + diphosphate. It functions in the pathway secondary metabolite biosynthesis; terpenoid biosynthesis. Catalyzes the conversion of (2E,6E)-farnesyl diphosphate (FPP) to yield the bicyclic sesquiterpene eremophilene via a 1,10-cyclization, which requires the abstraction of the pyrophosphate from FPP to yield the (E,E)-germacradienyl cation. The only accepted substrate is farnesyl diphosphate (FPP). The protein is (+)-eremophilene synthase of Gibberella fujikuroi (strain CBS 195.34 / IMI 58289 / NRRL A-6831) (Bakanae and foot rot disease fungus).